We begin with the raw amino-acid sequence, 268 residues long: Tryptophan synthase alpha chain (268 aa).

Catalysis depends on proton acceptor residues Glu49 and Asp60.

It belongs to the TrpA family. In terms of assembly, tetramer of two alpha and two beta chains.

It catalyses the reaction (1S,2R)-1-C-(indol-3-yl)glycerol 3-phosphate + L-serine = D-glyceraldehyde 3-phosphate + L-tryptophan + H2O. Its pathway is amino-acid biosynthesis; L-tryptophan biosynthesis; L-tryptophan from chorismate: step 5/5. In terms of biological role, the alpha subunit is responsible for the aldol cleavage of indoleglycerol phosphate to indole and glyceraldehyde 3-phosphate. The protein is Tryptophan synthase alpha chain of Vibrio vulnificus (strain YJ016).